Here is a 546-residue protein sequence, read N- to C-terminus: Cation/calcium exchanger 5 (546 aa).

The next 13 helical transmembrane spans lie at 13–33 (ALCLTLISILIFFFLTTTTIP), 88–108 (NLFFSIPILSLLILLHFYILI), 134–154 (AVTLLALGNGAPDVFASVAAL), 163–183 (FGAILSAGTFVSAFVVGFVAI), 194–214 (SFVRDVLFYLIAALFLFYVYL), 218–238 (IFVWQAIGFVGFYIFFVGFVF), 323–343 (SANIVFCPFALLYTCNSFVQL), 356–376 (LPLWLVVLFMTSSLAFLHFTV), 388–408 (VIVVAFIMSVFWISTIAGELL), 423–445 (ALLGLTVLAWGNSVGDLVADVAV), 455–475 (MAGCFAGPMFNMLVGLGSALV), 492–512 (VGIVIAFVFLLLSLMGSLLVI), and 522–542 (FWGICLVGLYVAFTFVSLIIA).

This sequence belongs to the Ca(2+):cation antiporter (CaCA) (TC 2.A.19) family. Cation/calcium exchanger (CCX) subfamily.

Its subcellular location is the cell membrane. Membrane-localized H(+)-dependent K(+) and Na(+) transporter. In Arabidopsis thaliana (Mouse-ear cress), this protein is Cation/calcium exchanger 5 (CCX5).